Here is a 170-residue protein sequence, read N- to C-terminus: Bifunctional protein PyrR (170 aa).

Positions 90 to 102 match the PRPP-binding motif; it reads LVLIDDVLMSGRT.

This sequence belongs to the purine/pyrimidine phosphoribosyltransferase family. PyrR subfamily.

The enzyme catalyses UMP + diphosphate = 5-phospho-alpha-D-ribose 1-diphosphate + uracil. In terms of biological role, regulates the transcription of the pyrimidine nucleotide (pyr) operon in response to exogenous pyrimidines. Its function is as follows. Also displays a weak uracil phosphoribosyltransferase activity which is not physiologically significant. The protein is Bifunctional protein PyrR of Pseudomonas savastanoi pv. phaseolicola (strain 1448A / Race 6) (Pseudomonas syringae pv. phaseolicola (strain 1448A / Race 6)).